A 333-amino-acid chain; its full sequence is MAILVLGGAGYIGSHMVDRLIEKGEEEVVVVDSLVTGHRAAVHPAAKFYQGDLADREFMSMVFRENPDVDAVIHFAAYSLVAESMKKPLKYFDNNTAGMIKLLEVMSEFGVKYIVFSSTAATYGIPDEIPIKETTPQRPINPYGESKLMMETIMKWSDRAYGIKFVPLRYFNVAGAKPDGSIGEDHSPETHLLPIILQVAQGVREKIMIFGDDYNTPDGTNVRDYVHPFDLADAHLLALNYLRQGNPSTAFNLGSSTGFSNLQILEAARKVTGQKIPAEKAARRSGDPDTLIASSEKAREVLGWKPQFDDIEKIIASAWAWHSSYPKGYDDRD.

NAD(+)-binding positions include 11-12 (YI), 32-37 (DSLVTG), 52-53 (DL), 75-79 (FAAYS), asparagine 94, threonine 119, tyrosine 143, lysine 147, and phenylalanine 171. Substrate is bound by residues threonine 119 and tyrosine 143. Tyrosine 143 serves as the catalytic Proton acceptor. Substrate-binding positions include asparagine 172, 191–192 (HL), 208–210 (MIF), arginine 223, and 284–287 (RSGD).

It belongs to the NAD(P)-dependent epimerase/dehydratase family. Homodimer. It depends on NAD(+) as a cofactor.

The enzyme catalyses UDP-alpha-D-glucose = UDP-alpha-D-galactose. It participates in carbohydrate metabolism; galactose metabolism. In terms of biological role, involved in the metabolism of galactose. Catalyzes the conversion of UDP-galactose (UDP-Gal) to UDP-glucose (UDP-Glc) through a mechanism involving the transient reduction of NAD. The protein is UDP-glucose 4-epimerase (galE) of Streptococcus mutans serotype c (strain ATCC 700610 / UA159).